Reading from the N-terminus, the 430-residue chain is NEDD8-activating enzyme E1 catalytic subunit (430 aa).

Position 52–76 (52–76) interacts with ATP; the sequence is GLGCELLKNLALSGFRTIEVIDMDT. C211 serves as the catalytic Glycyl thioester intermediate.

The protein belongs to the ubiquitin-activating E1 family. UBA3 subfamily. In terms of assembly, heterodimer of uba-3 and ula-1. Interacts with NEDD8 and ubc-12. In terms of tissue distribution, expressed in intestine, vulva epithelium and head and tail neurons.

The protein localises to the nucleus. Its subcellular location is the cytoplasm. It carries out the reaction ATP + [NEDD8 protein] + [E1 NEDD8-activating enzyme]-L-cysteine = AMP + diphosphate + [E1 NEDD8-activating enzyme]-S-[NEDD8 protein]-yl-L-cysteine.. The protein operates within protein modification; protein neddylation. Functionally, catalytic subunit of the dimeric rfl-1 (uba-3)-ula-1 E1 enzyme. E1 activates NEDD8 by first adenylating its C-terminal glycine residue with ATP, thereafter linking this residue to the side chain of the catalytic cysteine, yielding a NEDD8-uba-3 thioester and free AMP. E1 finally transfers NEDD8 to the catalytic cysteine of ubc-12. Required for cytokinesis and mitotic spindle orientation during early embryogenesis. This chain is NEDD8-activating enzyme E1 catalytic subunit, found in Caenorhabditis elegans.